The sequence spans 165 residues: uncharacterized protein (165 aa).

The tract at residues 53–123 (CSEKTGSAPN…PAPSSGRQGG (71 aa)) is disordered. The segment covering 58-71 (GSAPNPGSSAPAPA) has biased composition (low complexity).

This is an uncharacterized protein from Treponema pallidum (strain Nichols).